The sequence spans 358 residues: Heat-inducible transcription repressor HrcA (358 aa).

The protein belongs to the HrcA family.

Its function is as follows. Negative regulator of class I heat shock genes (grpE-dnaK-dnaJ and groELS operons). Prevents heat-shock induction of these operons. The sequence is that of Heat-inducible transcription repressor HrcA from Caulobacter vibrioides (strain NA1000 / CB15N) (Caulobacter crescentus).